Here is a 76-residue protein sequence, read N- to C-terminus: Acyl carrier protein (76 aa).

The Carrier domain maps to 1–76; sequence MATFDKVKDI…DVVNYIEQNQ (76 aa). An O-(pantetheine 4'-phosphoryl)serine modification is found at serine 36.

The protein belongs to the acyl carrier protein (ACP) family. Post-translationally, 4'-phosphopantetheine is transferred from CoA to a specific serine of apo-ACP by AcpS. This modification is essential for activity because fatty acids are bound in thioester linkage to the sulfhydryl of the prosthetic group.

It localises to the cytoplasm. Its pathway is lipid metabolism; fatty acid biosynthesis. Carrier of the growing fatty acid chain in fatty acid biosynthesis. This chain is Acyl carrier protein, found in Natranaerobius thermophilus (strain ATCC BAA-1301 / DSM 18059 / JW/NM-WN-LF).